A 176-amino-acid chain; its full sequence is Ferritin, liver middle subunit (176 aa).

A Ferritin-like diiron domain is found at 7 to 156 (QNYHRDCEAA…DFITNLSRMD (150 aa)). The Fe cation site is built by E24, E59, H62, E104, and Q138.

It belongs to the ferritin family. As to quaternary structure, in liver, forms a heteromer consisting of middle and heavy subunits. The functional molecule forms a roughly spherical shell with a diameter of 12 nm and contains a central cavity into which the insoluble mineral iron core is deposited. As to expression, liver (at protein level).

The enzyme catalyses 4 Fe(2+) + O2 + 4 H(+) = 4 Fe(3+) + 2 H2O. Functionally, stores iron in a soluble, non-toxic, readily available form. Important for iron homeostasis. Has ferroxidase activity. Iron is taken up in the ferrous form and deposited as ferric hydroxides after oxidation. The chain is Ferritin, liver middle subunit from Trematomus bernacchii (Emerald rockcod).